The primary structure comprises 270 residues: MDNKIVYVVSDSVGETADLVVRAAMGQFPFAPDIRRVPYVEDTGTLKEVISIAKSNRALICFTLVKPDMRQYLLTEAAKEGVEAYDIIGPLIDQIAEITRQVPRYEPGIVRKLDEEYFKKIEAIEFAVKYDDGRDARGILKADIVLIGVSRTSKTPLSQYLAHNKRLKVANVPLVPEVDPPEELYQVSKEKCFGLKINPEKLNHIRKERLKSLGLSDGATYANINRIKEEIDHFEKVINKINCQVIDVSNKAIEETANIIVNAVQNQRMF.

An ADP-binding site is contributed by 148 to 155 (GVSRTSKT).

This sequence belongs to the pyruvate, phosphate/water dikinase regulatory protein family. PDRP subfamily.

The enzyme catalyses N(tele)-phospho-L-histidyl/L-threonyl-[pyruvate, phosphate dikinase] + ADP = N(tele)-phospho-L-histidyl/O-phospho-L-threonyl-[pyruvate, phosphate dikinase] + AMP + H(+). It carries out the reaction N(tele)-phospho-L-histidyl/O-phospho-L-threonyl-[pyruvate, phosphate dikinase] + phosphate + H(+) = N(tele)-phospho-L-histidyl/L-threonyl-[pyruvate, phosphate dikinase] + diphosphate. Bifunctional serine/threonine kinase and phosphorylase involved in the regulation of the pyruvate, phosphate dikinase (PPDK) by catalyzing its phosphorylation/dephosphorylation. The protein is Putative pyruvate, phosphate dikinase regulatory protein of Bacillus cytotoxicus (strain DSM 22905 / CIP 110041 / 391-98 / NVH 391-98).